A 137-amino-acid polypeptide reads, in one-letter code: MERTFIMLKPDAVKNKHIGDILQRIEKEGFKILGMKFLKLSLEDAKQFYAVHAARPFYNDLCTYMASGPIVACALERDNAVAHWRDVIGATDPKEAKAGTIRALFAESKEANAVHGSDSVANALQEIAFFFKGYELN.

ATP-binding residues include Lys9, Phe57, Arg85, Thr91, Arg102, and Asn112. The active-site Pros-phosphohistidine intermediate is the His115.

This sequence belongs to the NDK family. In terms of assembly, homotetramer. Requires Mg(2+) as cofactor.

It localises to the cytoplasm. It carries out the reaction a 2'-deoxyribonucleoside 5'-diphosphate + ATP = a 2'-deoxyribonucleoside 5'-triphosphate + ADP. It catalyses the reaction a ribonucleoside 5'-diphosphate + ATP = a ribonucleoside 5'-triphosphate + ADP. In terms of biological role, major role in the synthesis of nucleoside triphosphates other than ATP. The ATP gamma phosphate is transferred to the NDP beta phosphate via a ping-pong mechanism, using a phosphorylated active-site intermediate. The protein is Nucleoside diphosphate kinase of Leptospira biflexa serovar Patoc (strain Patoc 1 / ATCC 23582 / Paris).